Consider the following 346-residue polypeptide: D-erythrose-4-phosphate dehydrogenase (346 aa).

Position 11–12 (11–12 (RI)) interacts with NAD(+). Substrate is bound by residues 163 to 165 (SCT), Arg-209, 222 to 223 (TK), and Arg-245. Cys-164 (nucleophile) is an active-site residue. Asn-327 lines the NAD(+) pocket.

It belongs to the glyceraldehyde-3-phosphate dehydrogenase family. Epd subfamily. In terms of assembly, homotetramer.

It is found in the cytoplasm. It catalyses the reaction D-erythrose 4-phosphate + NAD(+) + H2O = 4-phospho-D-erythronate + NADH + 2 H(+). Its pathway is cofactor biosynthesis; pyridoxine 5'-phosphate biosynthesis; pyridoxine 5'-phosphate from D-erythrose 4-phosphate: step 1/5. In terms of biological role, catalyzes the NAD-dependent conversion of D-erythrose 4-phosphate to 4-phosphoerythronate. In Vibrio vulnificus (strain CMCP6), this protein is D-erythrose-4-phosphate dehydrogenase.